Here is a 221-residue protein sequence, read N- to C-terminus: Large ribosomal subunit protein uL1 (221 aa).

It belongs to the universal ribosomal protein uL1 family. In terms of assembly, part of the 50S ribosomal subunit.

Functionally, probably involved in E site tRNA release. Binds directly to 23S rRNA. Protein L1 is also a translational repressor protein, it controls the translation of its operon by binding to its mRNA. The polypeptide is Large ribosomal subunit protein uL1 (Sulfolobus acidocaldarius (strain ATCC 33909 / DSM 639 / JCM 8929 / NBRC 15157 / NCIMB 11770)).